Consider the following 878-residue polypeptide: Probable LRR receptor-like serine/threonine-protein kinase MEE39 (878 aa).

The first 25 residues, 1-25, serve as a signal peptide directing secretion; sequence MKNLCWVFLSLFWFGVFLIIRFAEG. Residues 26–514 lie on the Extracellular side of the membrane; the sequence is QNQEGFISLD…IDKPKKKVAV (489 aa). N-linked (GlcNAc...) asparagine glycosylation is found at Asn183, Asn203, Asn235, Asn290, Asn404, Asn418, Asn445, and Asn466. LRR repeat units lie at residues 413–436, 437–458, and 461–483; these read RIISLNLSSSGLSGTIVSNFQNLA, HLESLDLSNNSLSGIVPEFLAT, and SLLVINLSGNKLSGAIPQALRDR. A helical transmembrane segment spans residues 515–535; that stretch reads KVVAPVASIAAIVVVILLFVF. Topologically, residues 536–878 are cytoplasmic; the sequence is KKKMSSRNKP…FDTDVKPKAR (343 aa). Residue Thr557 is modified to Phosphothreonine. A Protein kinase domain is found at 566-840; that stretch reads KNLQRPLGEG…QVIINLKECL (275 aa). ATP is bound by residues 572–580 and Lys594; that span reads LGEGGFGVV. Residue Tyr639 is modified to Phosphotyrosine. The active-site Proton acceptor is the Asp691. A Phosphoserine modification is found at Ser726. A phosphothreonine mark is found at Thr727 and Thr732. The residue at position 740 (Tyr740) is a Phosphotyrosine. Residues 849–869 are compositionally biased toward polar residues; it reads RNNQNMDSGHSSDQLNVTVTF. Positions 849 to 878 are disordered; the sequence is RNNQNMDSGHSSDQLNVTVTFDTDVKPKAR.

The protein belongs to the protein kinase superfamily. Ser/Thr protein kinase family.

It localises to the membrane. It carries out the reaction L-seryl-[protein] + ATP = O-phospho-L-seryl-[protein] + ADP + H(+). It catalyses the reaction L-threonyl-[protein] + ATP = O-phospho-L-threonyl-[protein] + ADP + H(+). In terms of biological role, receptor-like serine/threonine-kinase required during the endosperm development in seeds. In Arabidopsis thaliana (Mouse-ear cress), this protein is Probable LRR receptor-like serine/threonine-protein kinase MEE39 (MEE39).